A 193-amino-acid chain; its full sequence is MKIGILALQGAFAEHAKVLDQLGVESVELRNLDDFQQDQSDLSGLILPGGESTTMGKLLRDQNMLLPIREAILSGLPVFGTCAGLILLAKEITSQKESHLGTMDMVVERNAYGRQLGSFYTEAECKGVGKIPMTFIRGPIISSVGEGVEILATVNNQIVAAQEKNMLVSSFHPELTDDVRLHQYFINMCKEKS.

50 to 52 (GES) contacts L-glutamine. The active-site Nucleophile is Cys-82. L-glutamine is bound by residues Arg-109 and 136-137 (IR). Active-site charge relay system residues include His-172 and Glu-174.

This sequence belongs to the glutaminase PdxT/SNO family. As to quaternary structure, in the presence of PdxS, forms a dodecamer of heterodimers. Only shows activity in the heterodimer.

It carries out the reaction aldehydo-D-ribose 5-phosphate + D-glyceraldehyde 3-phosphate + L-glutamine = pyridoxal 5'-phosphate + L-glutamate + phosphate + 3 H2O + H(+). The enzyme catalyses L-glutamine + H2O = L-glutamate + NH4(+). The protein operates within cofactor biosynthesis; pyridoxal 5'-phosphate biosynthesis. In terms of biological role, catalyzes the hydrolysis of glutamine to glutamate and ammonia as part of the biosynthesis of pyridoxal 5'-phosphate. The resulting ammonia molecule is channeled to the active site of PdxS. This chain is Pyridoxal 5'-phosphate synthase subunit PdxT, found in Streptococcus pneumoniae (strain JJA).